The following is a 188-amino-acid chain: UPF0461 protein C5orf24 homolog (188 aa).

The residue at position 37 (serine 37) is a Phosphoserine. Residue lysine 75 forms a Glycyl lysine isopeptide (Lys-Gly) (interchain with G-Cter in SUMO2) linkage. A disordered region spans residues 79–142; that stretch reads KKKKNLNRSG…GYKVSPGRPP (64 aa). A compositionally biased stretch (basic residues) spans 80 to 92; that stretch reads KKKNLNRSGKRGR. Polar residues predominate over residues 94–107; that stretch reads SGTTKSAGYRTSTG. Phosphoserine occurs at positions 121 and 180. Lysine 184 participates in a covalent cross-link: Glycyl lysine isopeptide (Lys-Gly) (interchain with G-Cter in SUMO2).

The protein belongs to the UPF0461 family.

In Bos taurus (Bovine), this protein is UPF0461 protein C5orf24 homolog.